The following is a 246-amino-acid chain: Mast cell protease 2 (246 aa).

Positions 1–19 (MHRPPLPLVLLLLCCRAQA) are cleaved as a signal peptide. Positions 20–21 (GE) are cleaved as a propeptide — activation peptide. One can recognise a Peptidase S1 domain in the interval 22–244 (IIGGTESKPH…YRPWIDEVLK (223 aa)). A disulfide bridge connects residues C51 and C67. Residues H66 and D109 each act as charge relay system in the active site. N120 carries an N-linked (GlcNAc...) asparagine glycan. Cystine bridges form between C143–C208 and C174–C187. S202 (charge relay system) is an active-site residue.

Belongs to the peptidase S1 family. Granzyme subfamily.

The protein localises to the secreted. It is found in the cytoplasmic granule. Its function is as follows. Putative mast cell chymase. The chain is Mast cell protease 2 from Ovis aries (Sheep).